Here is a 162-residue protein sequence, read N- to C-terminus: Endoribonuclease YbeY (162 aa).

Zn(2+) is bound by residues His117, His121, and His127.

It belongs to the endoribonuclease YbeY family. Zn(2+) serves as cofactor.

It localises to the cytoplasm. Single strand-specific metallo-endoribonuclease involved in late-stage 70S ribosome quality control and in maturation of the 3' terminus of the 16S rRNA. The chain is Endoribonuclease YbeY from Francisella tularensis subsp. novicida (strain U112).